A 706-amino-acid chain; its full sequence is Elongation factor G (706 aa).

Positions 12 to 288 (EKTRNIGIMA…GVTNYLPSPN (277 aa)) constitute a tr-type G domain. GTP-binding positions include 21–28 (AHIDAGKT), 85–89 (DTPGH), and 139–142 (NKMD). The disordered stretch occupies residues 288–309 (NDVPAITGHHPQDKEEDITRHP). The span at 297 to 309 (HPQDKEEDITRHP) shows a compositional bias: basic and acidic residues.

It belongs to the TRAFAC class translation factor GTPase superfamily. Classic translation factor GTPase family. EF-G/EF-2 subfamily.

It is found in the cytoplasm. In terms of biological role, catalyzes the GTP-dependent ribosomal translocation step during translation elongation. During this step, the ribosome changes from the pre-translocational (PRE) to the post-translocational (POST) state as the newly formed A-site-bound peptidyl-tRNA and P-site-bound deacylated tRNA move to the P and E sites, respectively. Catalyzes the coordinated movement of the two tRNA molecules, the mRNA and conformational changes in the ribosome. This chain is Elongation factor G, found in Salinibacter ruber (strain DSM 13855 / M31).